Reading from the N-terminus, the 1165-residue chain is MSEISYLSINNAHNGIIIKIPKPVRFHTLSEFKKYIQQSYSIDSVDNLFLLTTFGIKLNYNLINEIGEVFVYDKRLFTNIVDQSLIDQYTQSTFRVSEPTHSPLLKSNVGFLKQNLSSNLKINQGWARIITQDGELMDQYCRELIQQINVIFKCLNTIFQFATNFTNEIEKNFSNFFNYVKLINYKTLHKSWITNYKNLKTFPTFKIDNENIKLSDFLEVDRLQSSADYIEKFLPLIVNKLNELKQVIETVNEEKLTVDKFIETSRNESISNFKNVNISNVLSQLQTESQQLTDDIENLHYKNMDEIYRLHRDKLSISIYNNAKDIYKNLNDLQQFKNKLTKASLKAFNTIANLQMKMVGVKTEMKKITTEDETATEDSKVGDVNYKTISNVKKYEDYLSLTIDLPLIFGFSLIEKRRQFEWYDFYSKGIVNNVSEQLSTIIEHEKVFRGIWLKKFGTLLSLINDDPLTPSLPNIDVTLVGNRQNNFSILYDLKIERDDIINYISLIEATNMSKNFVTLLNKNFKDLIASTNNMKKVTKVISSLSTYTTNSADDKSKSSHEEGTEEEIDFDLNLIKGLKSRIKKLENLLHQQQFKNLNNWPVIRNVPSMTNDNRQSTIIQPTVVSPARTNPTQLLSRNPSTTKENTTTNIHNNHQQSEVLDSSVIDKHLDNIRLKKLNNELQTKNTELTNQINSKNETITQQQKEMEHMKLKTEKRVDELMKKLQEKDEECQSLKQENKIKCDEVENLTKKLELSDNHNKELEAKITEYTQKATSKTKEIADLNKTVSNLRSELGDAMHMKNDLLSNLSSKEAEFTKERNQFNNDLKALQLKLDEINEDYENLMELTQAKQKKHDLIINDLNNVIINLMNDIKKTLLSVFEYFLEYCLVLESMGLLLVKEDEIYKIKRVKGLKSKKSIGDGDMSIISNGTPSSKVIEEIENEINIVNNIPPISSILPDSYSSGTESDSVVDRYNDQSMKLISTFNQLFKFNNENENENRIDHILNTLAFKNNVQLQEDSINDTRFFLNAISKRFRDVEGFAKRQAKDNKLKEQEHRKLVHRLNSKISVNGFQEKDLVLFLPTRIDRPNGENIPSNDKIQPWAAFNIGAPHYFLKTEQTKNKEWIIGRVKKITEYKVTEENVQSLESNPFQLSVNVTWYLVEADEE.

2 coiled-coil regions span residues 239 to 304 and 670 to 853; these read NKLN…YKNM and DNIR…KQKK.

It belongs to the ATG11 family. In terms of assembly, homodimer and potential homooligomers.

The protein localises to the preautophagosomal structure membrane. In terms of biological role, plays an essential role in both non-selective and selective autophagy such as mitophagy. Recruits mitochondria for their selective degradation via autophagy (mitophagy) during starvation, through its interaction with ATG32. Works as scaffold proteins that recruit ATG proteins to the pre-autophagosome (PAS), the site of vesicle/autophagosome formation. Required for ATG9 anterograde transport from the mitochondria to the PAS. This Candida albicans (strain SC5314 / ATCC MYA-2876) (Yeast) protein is Autophagy-related protein 11.